A 412-amino-acid chain; its full sequence is Mannose-1-phosphate guanylyltransferase regulatory subunit alpha (412 aa).

The interval 6–259 (TKAIILVGGP…VGFWRQIKNA (254 aa)) is substrate-binding domain. 2 residues coordinate GDP-alpha-D-mannose: Glu88 and Gln255. The interval 281–412 (LKKGNNIIGN…DRNYNNEIIL (132 aa)) is hexapeptide repeat domain.

This sequence belongs to the transferase hexapeptide repeat family. In terms of assembly, component of the GMPPA-GMPPB mannose-1-phosphate guanylyltransferase complex composed of 4 gmppA subunits and 8 gmppB subunits; the complex is organized into three layers, a central layer made up of 2 gmppA dimers sandwiched between two layers each made up of 2 gmppB dimers.

In terms of biological role, regulatory subunit of the GMPPA-GMPPB mannose-1-phosphate guanylyltransferase complex; reduces the catalytic activity of GMPPB when part of the complex. Mediates allosteric feedback inhibition of GMPPB catalytic activity upon binding GDP-alpha-D-mannose. Together with GMPPB regulates GDP-alpha-D-mannose levels. This is Mannose-1-phosphate guanylyltransferase regulatory subunit alpha (gmppA) from Dictyostelium discoideum (Social amoeba).